A 424-amino-acid polypeptide reads, in one-letter code: MFS-type transporter opdF (424 aa).

Positions 1 to 10 (MSDTSLEKGN) are enriched in basic and acidic residues. The tract at residues 1-23 (MSDTSLEKGNEGPTAEAPKVAPP) is disordered. The next 5 helical transmembrane spans lie at 36 to 56 (VAGA…IALF), 102 to 122 (VPIA…SLST), 127 to 147 (LMLS…TPAM), 160 to 180 (IVGG…PLMV), and 187 to 207 (VGFG…LVFA). The N-linked (GlcNAc...) asparagine glycan is linked to N208. The next 6 helical transmembrane spans lie at 239–259 (LCVA…YIVV), 265–285 (GMST…SFFG), 299–319 (FNVM…LWLP), 329–349 (FAAL…VLIV), 364–384 (VLAF…AIAA), and 391–411 (TYTC…LAAL).

Belongs to the major facilitator superfamily. Monocarboxylate porter (TC 2.A.1.13) family.

It localises to the membrane. Its function is as follows. MFS-type transporter; part of the gene cluster that mediates the biosynthesis of oxopyrrolidines, polyketide-amino acid hybrid compounds with feature structures of tetramic acid. This is MFS-type transporter opdF from Penicillium oxalicum (strain 114-2 / CGMCC 5302) (Penicillium decumbens).